Consider the following 124-residue polypeptide: Fluoride-specific ion channel FluC (124 aa).

4 helical membrane passes run 1-21 (MAYL…HFIN), 36-56 (TFFI…YLAF), 66-86 (LFLM…SLDA), and 94-114 (AVGL…AGLF). Na(+) contacts are provided by Gly74 and Thr77.

The protein belongs to the fluoride channel Fluc/FEX (TC 1.A.43) family.

The protein localises to the cell inner membrane. The catalysed reaction is fluoride(in) = fluoride(out). Its activity is regulated as follows. Na(+) is not transported, but it plays an essential structural role and its presence is essential for fluoride channel function. Functionally, fluoride-specific ion channel. Important for reducing fluoride concentration in the cell, thus reducing its toxicity. This chain is Fluoride-specific ion channel FluC, found in Rhodopseudomonas palustris (strain ATCC BAA-98 / CGA009).